Consider the following 188-residue polypeptide: Large ribosomal subunit protein bL35m (188 aa).

Belongs to the bacterial ribosomal protein bL35 family. Component of the mitochondrial large ribosomal subunit (mt-LSU). Mature mammalian 55S mitochondrial ribosomes consist of a small (28S) and a large (39S) subunit. The 28S small subunit contains a 12S ribosomal RNA (12S mt-rRNA) and 30 different proteins. The 39S large subunit contains a 16S rRNA (16S mt-rRNA), a copy of mitochondrial valine transfer RNA (mt-tRNA(Val)), which plays an integral structural role, and 52 different proteins.

The protein localises to the mitochondrion. The chain is Large ribosomal subunit protein bL35m (MRPL35) from Homo sapiens (Human).